Here is a 143-residue protein sequence, read N- to C-terminus: Actin-depolymerizing factor 2 (143 aa).

An ADF-H domain is found at 5-139 (ASGMAVHDDC…GLDVFRSRAG (135 aa)).

The protein belongs to the actin-binding proteins ADF family.

Functionally, actin-depolymerizing protein. Severs actin filaments (F-actin) and binds to actin monomers. This Petunia hybrida (Petunia) protein is Actin-depolymerizing factor 2 (ADF2).